The sequence spans 377 residues: Chaperone protein DnaJ (377 aa).

One can recognise a J domain in the interval 5-70 (DYYEVLEVSR…EKRTIYDRYG (66 aa)). The CR-type zinc-finger motif lies at 138 to 215 (GCEKKIDITY…CQGKGYHEET (78 aa)). Residues Cys-151, Cys-154, Cys-167, Cys-170, Cys-189, Cys-192, Cys-203, and Cys-206 each coordinate Zn(2+). CXXCXGXG motif repeat units follow at residues 151–158 (CEECGGTG), 167–174 (CDYCGGQG), 189–196 (CPKCHGEG), and 203–210 (CPSCQGKG).

The protein belongs to the DnaJ family. Homodimer. Zn(2+) is required as a cofactor.

The protein localises to the cytoplasm. Participates actively in the response to hyperosmotic and heat shock by preventing the aggregation of stress-denatured proteins and by disaggregating proteins, also in an autonomous, DnaK-independent fashion. Unfolded proteins bind initially to DnaJ; upon interaction with the DnaJ-bound protein, DnaK hydrolyzes its bound ATP, resulting in the formation of a stable complex. GrpE releases ADP from DnaK; ATP binding to DnaK triggers the release of the substrate protein, thus completing the reaction cycle. Several rounds of ATP-dependent interactions between DnaJ, DnaK and GrpE are required for fully efficient folding. Also involved, together with DnaK and GrpE, in the DNA replication of plasmids through activation of initiation proteins. The polypeptide is Chaperone protein DnaJ (Sulfurovum sp. (strain NBC37-1)).